Reading from the N-terminus, the 478-residue chain is Probable cyclin-dependent kinase 9 (478 aa).

Residues 1-17 are compositionally biased toward polar residues; it reads MSAQNYHAGLHQSSTQR. The interval 1–55 is disordered; it reads MSAQNYHAGLHQSSTQRPPKRPNTEHAQEPPKRALIGGQTTPSSSGGGQTPNGTN. A compositionally biased stretch (basic and acidic residues) spans 22-32; it reads PNTEHAQEPPK. Residues 85–413 enclose the Protein kinase domain; it reads YEKLNKIGQG…SDEAEDDIWF (329 aa). Residues 91–99 and lysine 114 each bind ATP; that span reads IGQGTFGEV. Aspartate 217 functions as the Proton acceptor in the catalytic mechanism. The interval 444–478 is disordered; sequence HANRGRHQNAQQRPNQQQARPSNAIPAGQYRDTIF. A compositionally biased stretch (low complexity) spans 451-464; it reads QNAQQRPNQQQARP.

It belongs to the protein kinase superfamily. CMGC Ser/Thr protein kinase family. CDC2/CDKX subfamily. Associates with cyclin-T (cit-1.1 or cit-1.2) to form P-TEFb.

Its subcellular location is the nucleus. It catalyses the reaction L-seryl-[protein] + ATP = O-phospho-L-seryl-[protein] + ADP + H(+). The enzyme catalyses L-threonyl-[protein] + ATP = O-phospho-L-threonyl-[protein] + ADP + H(+). It carries out the reaction [DNA-directed RNA polymerase] + ATP = phospho-[DNA-directed RNA polymerase] + ADP + H(+). Essential member of the cyclin-dependent kinase pair (CDK9/cyclin-T) complex, also called positive transcription elongation factor B (P-TEFb), which is proposed to facilitate the transition from abortive to production elongation by phosphorylating the CTD (C-terminal domain) of the large subunit of RNA polymerase II (RNAP II) and spt-5. The sequence is that of Probable cyclin-dependent kinase 9 (cdk-9) from Caenorhabditis elegans.